The primary structure comprises 64 residues: DNA-directed RNA polymerase subunit Rpo10 (64 aa).

Zn(2+) contacts are provided by Cys-7, Cys-10, Cys-45, and Cys-46.

It belongs to the archaeal Rpo10/eukaryotic RPB10 RNA polymerase subunit family. Part of the RNA polymerase complex. It depends on Zn(2+) as a cofactor.

It localises to the cytoplasm. The enzyme catalyses RNA(n) + a ribonucleoside 5'-triphosphate = RNA(n+1) + diphosphate. DNA-dependent RNA polymerase (RNAP) catalyzes the transcription of DNA into RNA using the four ribonucleoside triphosphates as substrates. This is DNA-directed RNA polymerase subunit Rpo10 from Halorubrum lacusprofundi (strain ATCC 49239 / DSM 5036 / JCM 8891 / ACAM 34).